The chain runs to 364 residues: Cobalt-precorrin-5B C(1)-methyltransferase (364 aa).

Belongs to the CbiD family.

It carries out the reaction Co-precorrin-5B + S-adenosyl-L-methionine = Co-precorrin-6A + S-adenosyl-L-homocysteine. It participates in cofactor biosynthesis; adenosylcobalamin biosynthesis; cob(II)yrinate a,c-diamide from sirohydrochlorin (anaerobic route): step 6/10. In terms of biological role, catalyzes the methylation of C-1 in cobalt-precorrin-5B to form cobalt-precorrin-6A. In Pseudomonas putida (strain ATCC 47054 / DSM 6125 / CFBP 8728 / NCIMB 11950 / KT2440), this protein is Cobalt-precorrin-5B C(1)-methyltransferase.